The chain runs to 143 residues: Acetyltransferase plu1384 (143 aa).

In terms of domain architecture, N-acetyltransferase spans Met1–Ile138.

Belongs to the acetyltransferase family. YpeA subfamily.

In Photorhabdus laumondii subsp. laumondii (strain DSM 15139 / CIP 105565 / TT01) (Photorhabdus luminescens subsp. laumondii), this protein is Acetyltransferase plu1384.